We begin with the raw amino-acid sequence, 97 residues long: Defensin-like protein 245 (97 aa).

The signal sequence occupies residues 1 to 24 (MKFAAILLVTCVLFSLLPSHLSQG). Intrachain disulfides connect Cys39-Cys96, Cys50-Cys79, Cys58-Cys89, and Cys77-Cys91.

This sequence belongs to the DEFL family. Flower buds and roots.

The protein localises to the secreted. The polypeptide is Defensin-like protein 245 (SCRL4) (Arabidopsis thaliana (Mouse-ear cress)).